Consider the following 496-residue polypeptide: Cytochrome P450 3A56 (496 aa).

C441 provides a ligand contact to heme.

It belongs to the cytochrome P450 family. Heme is required as a cofactor. Highly expressed in liver and intestine. Moderate expression in gill and spleen. Low expression in kidney, brain and heart.

It localises to the endoplasmic reticulum membrane. The protein localises to the microsome membrane. It catalyses the reaction an organic molecule + reduced [NADPH--hemoprotein reductase] + O2 = an alcohol + oxidized [NADPH--hemoprotein reductase] + H2O + H(+). In terms of biological role, putative steroid 6-beta-hydroxylase. The protein is Cytochrome P450 3A56 (cyp3a56) of Fundulus heteroclitus (Killifish).